Here is a 98-residue protein sequence, read N- to C-terminus: NADH-ubiquinone oxidoreductase chain 4L (98 aa).

Helical transmembrane passes span M1 to T21, S29 to L49, and I61 to I81.

It belongs to the complex I subunit 4L family. In terms of assembly, core subunit of respiratory chain NADH dehydrogenase (Complex I) which is composed of 45 different subunits.

The protein resides in the mitochondrion inner membrane. The catalysed reaction is a ubiquinone + NADH + 5 H(+)(in) = a ubiquinol + NAD(+) + 4 H(+)(out). In terms of biological role, core subunit of the mitochondrial membrane respiratory chain NADH dehydrogenase (Complex I) which catalyzes electron transfer from NADH through the respiratory chain, using ubiquinone as an electron acceptor. Part of the enzyme membrane arm which is embedded in the lipid bilayer and involved in proton translocation. This chain is NADH-ubiquinone oxidoreductase chain 4L (MT-ND4L), found in Macaca pagensis (Mentawai macaque).